A 177-amino-acid polypeptide reads, in one-letter code: Bifunctional protein PyrR (177 aa).

Residues 97 to 109 (IILVDDVLYTGRT) carry the PRPP-binding motif.

The protein belongs to the purine/pyrimidine phosphoribosyltransferase family. PyrR subfamily.

The catalysed reaction is UMP + diphosphate = 5-phospho-alpha-D-ribose 1-diphosphate + uracil. Its function is as follows. Regulates the transcription of the pyrimidine nucleotide (pyr) operon in response to exogenous pyrimidines. In terms of biological role, also displays a weak uracil phosphoribosyltransferase activity which is not physiologically significant. This chain is Bifunctional protein PyrR, found in Nitrosococcus oceani (strain ATCC 19707 / BCRC 17464 / JCM 30415 / NCIMB 11848 / C-107).